A 385-amino-acid polypeptide reads, in one-letter code: Isocitrate dehydrogenase [NAD] subunit beta, mitochondrial (385 aa).

Residues 1–34 constitute a mitochondrion transit peptide; it reads MAALSGVRWLTRALVSAGNPGAWRGLSTSAAAHA. Residue Lys-199 is modified to N6-acetyllysine.

The protein belongs to the isocitrate and isopropylmalate dehydrogenases family. As to quaternary structure, heterooligomer of subunits alpha (IDH3A), beta (IDH3B), and gamma (IDH3G) in the apparent ratio of 2:1:1. The heterodimer containing one IDH3A and one IDH3B subunit and the heterodimer containing one IDH3A and one IDH3G subunit assemble into a heterotetramer (which contains two subunits of IDH3A, one of IDH3B and one of IDH3G) and further into the heterooctamer.

It is found in the mitochondrion. The heterotetramer and the heterodimer composed of IDH3A and IDH3G subunits can be allosterically activated by citrate (CIT) or/and ADP, and the two activators can act independently or synergistically. The heterodimer composed of IDH3A and IDH3B subunits cannot be allosterically regulated and the allosteric regulation of the heterotetramer is through the IDH3G subunit and not the IDH3B subunit. The IDH3G subunit contains the allosteric site which consists of a CIT-binding site and an ADP-binding site, and the binding of CIT and ADP causes conformational changes at the allosteric site which are transmitted to the active site in the catalytic subunit (IDH3A) through a cascade of conformational changes at the heterodimer interface, leading to stabilization of the isocitrate-binding at the active site and thus activation of the enzyme. ATP can activate the heterotetramer and the heterodimer composed of IDH3A and IDH3G subunits at low concentrations but inhibits their activities at high concentrations, whereas ATP exhibits only inhibitory effect on the heterodimer composed of IDH3A and IDH3B subunits. In terms of biological role, plays a structural role to facilitate the assembly and ensure the full activity of the enzyme catalyzing the decarboxylation of isocitrate (ICT) into alpha-ketoglutarate. The heterodimer composed of the alpha (IDH3A) and beta (IDH3B) subunits and the heterodimer composed of the alpha (IDH3A) and gamma (IDH3G) subunits, have considerable basal activity but the full activity of the heterotetramer (containing two subunits of IDH3A, one of IDH3B and one of IDH3G) requires the assembly and cooperative function of both heterodimers. This Macaca fascicularis (Crab-eating macaque) protein is Isocitrate dehydrogenase [NAD] subunit beta, mitochondrial (IDH3B).